The following is a 359-amino-acid chain: Membrane-bound lytic murein transglycosylase C (359 aa).

An N-terminal signal peptide occupies residues 1 to 16 (MKKYLALALIAPLLIS). Cys17 carries the N-palmitoyl cysteine lipid modification. Cys17 carries the S-diacylglycerol cysteine lipid modification.

This sequence belongs to the transglycosylase Slt family.

It localises to the cell outer membrane. The catalysed reaction is Exolytic cleavage of the (1-&gt;4)-beta-glycosidic linkage between N-acetylmuramic acid (MurNAc) and N-acetylglucosamine (GlcNAc) residues in peptidoglycan, from either the reducing or the non-reducing ends of the peptidoglycan chains, with concomitant formation of a 1,6-anhydrobond in the MurNAc residue.. Murein-degrading enzyme. May play a role in recycling of muropeptides during cell elongation and/or cell division. This is Membrane-bound lytic murein transglycosylase C from Escherichia coli O8 (strain IAI1).